The following is a 570-amino-acid chain: MLTDMDISRRAHLKDIAALGAEFGLLPDEMQLFGKTKAKVDLRAQQRLAEQQQGKLIIVTAVTPTPHGEGKTVTTIGLTQSLKALGNKVCACIRQPSMGPVFGVKGGAAGGGYAQVVPMQELNLHLTGDIHAVSSAHNLGAAAIASRLYHETRLGKAEFESQSGQNYLDIAPNGIRWHRVVDHNDRCLREIEVGLGENNGPAYTSGFDITAASELMAILALSRNLADMRARIGKLVLAVNRQGAAISAEDLGVAGAMTAIMADAVKPTLMQTLNGAPCLIHAGPFANIAHGNSSVIADDIALKLADFVVTEGGFGSDMGFEKFCNIKARQSGLAPSAAVLVTTLKALKANSGLTSDADINAPDQARLEAGFANLNWHINNVARYGIPVVVAINRFATDTDAELNWLIEAVAGTAAFGCELSEAFSQGEAGALTLAQTVMRACEQPSEFTLLYPDEMALEAKLSTLAEVGYGATGVSLSEAAKLQLQELSALGYADLPVCMAKTPLSISHDPQLKGVPQGFIVPVRELVLNAGAGFITALVGNVMTMPGLGLVPGYLKVDIGADGEITGLG.

65–72 provides a ligand contact to ATP; it reads TPHGEGKT.

Belongs to the formate--tetrahydrofolate ligase family.

It catalyses the reaction (6S)-5,6,7,8-tetrahydrofolate + formate + ATP = (6R)-10-formyltetrahydrofolate + ADP + phosphate. The protein operates within one-carbon metabolism; tetrahydrofolate interconversion. The polypeptide is Formate--tetrahydrofolate ligase (Shewanella sp. (strain ANA-3)).